We begin with the raw amino-acid sequence, 68 residues long: MNLKNLRKKNKKELNNELLNLLREQFNLRMQAGNGQLQHTHLLKEVRKNLAYVKMLINEEKKGRNNNG.

The protein belongs to the universal ribosomal protein uL29 family.

This Wigglesworthia glossinidia brevipalpis protein is Large ribosomal subunit protein uL29.